A 126-amino-acid chain; its full sequence is Histone H2B type 1-B (126 aa).

The span at 1-12 (MPEPSKSAPAPK) shows a compositional bias: low complexity. A disordered region spans residues 1–36 (MPEPSKSAPAPKKGSKKAISKAQKKDGKKRKRSRKE). P2 carries the N-acetylproline modification. E3 carries the post-translational modification ADP-ribosyl glutamic acid. K6 bears the N6-(2-hydroxyisobutyryl)lysine; alternate mark. K6 is modified (N6-(beta-hydroxybutyryl)lysine; alternate). At K6 the chain carries N6-acetyllysine; alternate. K6 is subject to N6-butyryllysine; alternate. Residue K6 is modified to N6-crotonyllysine; alternate. K6 carries the post-translational modification N6-lactoyllysine; alternate. A Glycyl lysine isopeptide (Lys-Gly) (interchain with G-Cter in SUMO2); alternate cross-link involves residue K6. S7 bears the ADP-ribosylserine mark. N6-(beta-hydroxybutyryl)lysine; alternate is present on K12. An N6-acetyllysine; alternate mark is found at K12 and K13. K12 and K13 each carry N6-crotonyllysine; alternate. Position 12 is an N6-lactoyllysine; alternate (K12). K13 is modified (N6-(2-hydroxyisobutyryl)lysine; alternate). S15 is modified (phosphoserine; by STK4/MST1). 4 positions are modified to N6-acetyllysine; alternate: K16, K17, K21, and K24. N6-crotonyllysine; alternate is present on residues K16, K17, K21, and K24. Residues K16, K17, K21, and K24 each carry the N6-lactoyllysine; alternate modification. Position 17 is an N6-glutaryllysine; alternate (K17). N6-(2-hydroxyisobutyryl)lysine; alternate is present on residues K21 and K24. The residue at position 21 (K21) is an N6-(beta-hydroxybutyryl)lysine; alternate. N6-butyryllysine; alternate is present on K21. K21 participates in a covalent cross-link: Glycyl lysine isopeptide (Lys-Gly) (interchain with G-Cter in SUMO2); alternate. K25 carries the post-translational modification N6-(2-hydroxyisobutyryl)lysine. The residue at position 35 (K35) is an N6-(2-hydroxyisobutyryl)lysine; alternate. K35 bears the N6-(beta-hydroxybutyryl)lysine; alternate mark. Residue K35 is modified to N6-crotonyllysine; alternate. K35 carries the post-translational modification N6-glutaryllysine; alternate. K35 carries the N6-succinyllysine; alternate modification. K35 is covalently cross-linked (Glycyl lysine isopeptide (Lys-Gly) (interchain with G-Cter in ubiquitin); alternate). E36 bears the PolyADP-ribosyl glutamic acid mark. At S37 the chain carries Phosphoserine; by AMPK. N6-(2-hydroxyisobutyryl)lysine; alternate occurs at positions 44, 47, and 58. Position 44 is an N6-lactoyllysine; alternate (K44). N6-glutaryllysine; alternate occurs at positions 44 and 47. K47 carries the N6-methyllysine; alternate modification. K58 bears the N6,N6-dimethyllysine; alternate mark. R80 bears the Dimethylated arginine mark. N6-(2-hydroxyisobutyryl)lysine; alternate is present on K86. K86 carries the N6-acetyllysine; alternate modification. K86 carries the post-translational modification N6-lactoyllysine; alternate. K86 carries the post-translational modification N6,N6,N6-trimethyllysine; alternate. An omega-N-methylarginine mark is found at R87 and R93. N6-(2-hydroxyisobutyryl)lysine; alternate is present on K109. At K109 the chain carries N6-(beta-hydroxybutyryl)lysine; alternate. K109 carries the post-translational modification N6-lactoyllysine; alternate. K109 is subject to N6-glutaryllysine; alternate. At K109 the chain carries N6-methyllysine; alternate. O-linked (GlcNAc) serine glycosylation occurs at S113. Position 116 is a phosphothreonine (T116). 2 positions are modified to N6-(2-hydroxyisobutyryl)lysine; alternate: K117 and K121. K117 carries the post-translational modification N6-(beta-hydroxybutyryl)lysine; alternate. N6-lactoyllysine; alternate is present on residues K117 and K121. An N6-glutaryllysine; alternate mark is found at K117 and K121. 2 positions are modified to N6-succinyllysine; alternate: K117 and K121. Position 117 is an N6-methylated lysine; alternate (K117). K121 is covalently cross-linked (Glycyl lysine isopeptide (Lys-Gly) (interchain with G-Cter in ubiquitin); alternate).

This sequence belongs to the histone H2B family. The nucleosome is a histone octamer containing two molecules each of H2A, H2B, H3 and H4 assembled in one H3-H4 heterotetramer and two H2A-H2B heterodimers. The octamer wraps approximately 147 bp of DNA. In terms of processing, monoubiquitination at Lys-35 (H2BK34Ub) by the MSL1/MSL2 dimer is required for histone H3 'Lys-4' (H3K4me) and 'Lys-79' (H3K79me) methylation and transcription activation at specific gene loci, such as HOXA9 and MEIS1 loci. Similarly, monoubiquitination at Lys-121 (H2BK120Ub) by the RNF20/40 complex gives a specific tag for epigenetic transcriptional activation and is also prerequisite for histone H3 'Lys-4' and 'Lys-79' methylation. It also functions cooperatively with the FACT dimer to stimulate elongation by RNA polymerase II. H2BK120Ub also acts as a regulator of mRNA splicing: deubiquitination by USP49 is required for efficient cotranscriptional splicing of a large set of exons. Phosphorylated on Ser-15 (H2BS14ph) by STK4/MST1 during apoptosis; which facilitates apoptotic chromatin condensation. Also phosphorylated on Ser-15 in response to DNA double strand breaks (DSBs), and in correlation with somatic hypermutation and immunoglobulin class-switch recombination. Phosphorylation at Ser-37 (H2BS36ph) by AMPK in response to stress promotes transcription. Post-translationally, glcNAcylation at Ser-113 promotes monoubiquitination of Lys-121. It fluctuates in response to extracellular glucose, and associates with transcribed genes. In terms of processing, ADP-ribosylated by PARP1 or PARP2 on Ser-7 (H2BS6ADPr) in response to DNA damage. H2BS6ADPr promotes recruitment of CHD1L. Mono-ADP-ribosylated on Glu-3 (H2BE2ADPr) by PARP3 in response to single-strand breaks. Poly ADP-ribosylation on Glu-36 (H2BE35ADPr) by PARP1 regulates adipogenesis: it inhibits phosphorylation at Ser-37 (H2BS36ph), thereby blocking expression of pro-adipogenetic genes. Hydroxybutyrylation of histones is induced by starvation. Post-translationally, crotonylation (Kcr) is specifically present in male germ cells and marks testis-specific genes in post-meiotic cells, including X-linked genes that escape sex chromosome inactivation in haploid cells. Crotonylation marks active promoters and enhancers and confers resistance to transcriptional repressors. It is also associated with post-meiotically activated genes on autosomes. In terms of processing, lactylated in macrophages by EP300/P300 by using lactoyl-CoA directly derived from endogenous or exogenous lactate, leading to stimulates gene transcription.

It is found in the nucleus. The protein resides in the chromosome. Core component of nucleosome. Nucleosomes wrap and compact DNA into chromatin, limiting DNA accessibility to the cellular machineries which require DNA as a template. Histones thereby play a central role in transcription regulation, DNA repair, DNA replication and chromosomal stability. DNA accessibility is regulated via a complex set of post-translational modifications of histones, also called histone code, and nucleosome remodeling. The polypeptide is Histone H2B type 1-B (Mus musculus (Mouse)).